A 359-amino-acid chain; its full sequence is Peptide chain release factor 1 (359 aa).

Gln-235 bears the N5-methylglutamine mark. Residues 280–306 (AERQRADSERSADRKSQVGSGDRSERI) form a disordered region.

The protein belongs to the prokaryotic/mitochondrial release factor family. Methylated by PrmC. Methylation increases the termination efficiency of RF1.

Its subcellular location is the cytoplasm. Peptide chain release factor 1 directs the termination of translation in response to the peptide chain termination codons UAG and UAA. The chain is Peptide chain release factor 1 from Rhizobium leguminosarum bv. trifolii (strain WSM2304).